A 258-amino-acid polypeptide reads, in one-letter code: Regulatory protein RecX (258 aa).

Belongs to the RecX family.

It localises to the cytoplasm. Its function is as follows. Modulates RecA activity. The polypeptide is Regulatory protein RecX (Streptococcus gordonii (strain Challis / ATCC 35105 / BCRC 15272 / CH1 / DL1 / V288)).